A 126-amino-acid chain; its full sequence is Large-conductance mechanosensitive channel (126 aa).

2 helical membrane passes run 14–34 and 67–87; these read VIDL…VKSL and GSFL…FILV.

This sequence belongs to the MscL family. As to quaternary structure, homopentamer.

It localises to the cell membrane. Functionally, channel that opens in response to stretch forces in the membrane lipid bilayer. May participate in the regulation of osmotic pressure changes within the cell. This is Large-conductance mechanosensitive channel from Lactiplantibacillus plantarum (strain ATCC BAA-793 / NCIMB 8826 / WCFS1) (Lactobacillus plantarum).